The sequence spans 329 residues: Ketol-acid reductoisomerase (NADP(+)) (329 aa).

Residues Met1–Thr181 enclose the KARI N-terminal Rossmann domain. NADP(+)-binding positions include Tyr24–Gln27, Arg47, and Asp82–Gln85. His107 is an active-site residue. Residue Gly133 coordinates NADP(+). The KARI C-terminal knotted domain maps to Thr182–Leu327. Asp190, Glu194, Glu226, and Glu230 together coordinate Mg(2+). Ser251 contributes to the substrate binding site.

This sequence belongs to the ketol-acid reductoisomerase family. The cofactor is Mg(2+).

It carries out the reaction (2R)-2,3-dihydroxy-3-methylbutanoate + NADP(+) = (2S)-2-acetolactate + NADPH + H(+). It catalyses the reaction (2R,3R)-2,3-dihydroxy-3-methylpentanoate + NADP(+) = (S)-2-ethyl-2-hydroxy-3-oxobutanoate + NADPH + H(+). The protein operates within amino-acid biosynthesis; L-isoleucine biosynthesis; L-isoleucine from 2-oxobutanoate: step 2/4. Its pathway is amino-acid biosynthesis; L-valine biosynthesis; L-valine from pyruvate: step 2/4. Involved in the biosynthesis of branched-chain amino acids (BCAA). Catalyzes an alkyl-migration followed by a ketol-acid reduction of (S)-2-acetolactate (S2AL) to yield (R)-2,3-dihydroxy-isovalerate. In the isomerase reaction, S2AL is rearranged via a Mg-dependent methyl migration to produce 3-hydroxy-3-methyl-2-ketobutyrate (HMKB). In the reductase reaction, this 2-ketoacid undergoes a metal-dependent reduction by NADPH to yield (R)-2,3-dihydroxy-isovalerate. This chain is Ketol-acid reductoisomerase (NADP(+)), found in Solidesulfovibrio magneticus (strain ATCC 700980 / DSM 13731 / RS-1) (Desulfovibrio magneticus).